The following is a 110-amino-acid chain: Small ubiquitin-related modifier 3 (110 aa).

Glycyl lysine isopeptide (Lys-Gly) (interchain with G-Cter in SUMO2) cross-links involve residues K5 and K7. Residue K11 forms a Glycyl lysine isopeptide (Lys-Gly) (interchain with G-Cter in SUMO); alternate linkage. Residue K11 forms a Glycyl lysine isopeptide (Lys-Gly) (interchain with G-Cter in SUMO2); alternate linkage. One can recognise a Ubiquitin-like domain in the interval 15–92 (DHINLKVAGQ…IDVFQQQTGG (78 aa)). The span at 89-101 (QTGGTASRASVPT) shows a compositional bias: polar residues. The tract at residues 89–110 (QTGGTASRASVPTPSHFPDICY) is disordered. G92 participates in a covalent cross-link: Glycyl lysine isopeptide (Gly-Lys) (interchain with K-? in acceptor proteins). Residues 93–110 (TASRASVPTPSHFPDICY) constitute a propeptide that is removed on maturation.

It belongs to the ubiquitin family. SUMO subfamily. As to quaternary structure, interacts with SAE2 and UBE2I. Covalently attached to a number of proteins. Interacts with USP25 (via ts SIM domain); the interaction sumoylates USP25 and inhibits its ubiquitin hydrolyzing activity. Interacts with BMAL1. Polymeric chains can be formed through Lys-11 cross-linking. Post-translationally, cleavage of precursor form by SENP1, SENP2 or SENP5 is necessary for function.

The protein resides in the cytoplasm. It is found in the nucleus. The protein localises to the PML body. Its function is as follows. Ubiquitin-like protein which can be covalently attached to target lysines either as a monomer or as a lysine-linked polymer. Does not seem to be involved in protein degradation and may function as an antagonist of ubiquitin in the degradation process. Plays a role in a number of cellular processes such as nuclear transport, DNA replication and repair, mitosis and signal transduction. Covalent attachment to its substrates requires prior activation by the E1 complex SAE1-SAE2 and linkage to the E2 enzyme UBE2I, and can be promoted by an E3 ligase such as PIAS1-4, RANBP2 or CBX4. Plays a role in the regulation of sumoylation status of SETX. The polypeptide is Small ubiquitin-related modifier 3 (Sumo3) (Rattus norvegicus (Rat)).